Here is a 122-residue protein sequence, read N- to C-terminus: MIQSFTRLNVADNSGAKEIMCIKVLGGSHKRYASVGSVIVASVKKAIPNGKVKFGLVVKTVVVRTKKEIQRKNGSLVRFDDNAAVILDAKKDPVGTRIFGPVSREVRYANFMKIISLAPEVV.

The protein belongs to the universal ribosomal protein uL14 family. In terms of assembly, part of the 50S ribosomal subunit. Forms a cluster with proteins L3 and L19. In the 70S ribosome, L14 and L19 interact and together make contacts with the 16S rRNA in bridges B5 and B8.

Its function is as follows. Binds to 23S rRNA. Forms part of two intersubunit bridges in the 70S ribosome. This chain is Large ribosomal subunit protein uL14, found in Helicobacter pylori (strain J99 / ATCC 700824) (Campylobacter pylori J99).